A 587-amino-acid chain; its full sequence is Arginine--tRNA ligase (587 aa).

The 'HIGH' region signature appears at 123 to 133 (ANVAKPLHVGH).

Belongs to the class-I aminoacyl-tRNA synthetase family. As to quaternary structure, monomer.

The protein localises to the cytoplasm. It catalyses the reaction tRNA(Arg) + L-arginine + ATP = L-arginyl-tRNA(Arg) + AMP + diphosphate. This chain is Arginine--tRNA ligase, found in Alkaliphilus oremlandii (strain OhILAs) (Clostridium oremlandii (strain OhILAs)).